A 352-amino-acid polypeptide reads, in one-letter code: Peptide chain release factor 1 (352 aa).

Position 233 is an N5-methylglutamine (Gln233). Residues 288 to 309 (NAKDRKEQVGSGDRSERIRTYN) form a disordered region. Over residues 289-306 (AKDRKEQVGSGDRSERIR) the composition is skewed to basic and acidic residues.

It belongs to the prokaryotic/mitochondrial release factor family. Post-translationally, methylated by PrmC. Methylation increases the termination efficiency of RF1.

The protein resides in the cytoplasm. Functionally, peptide chain release factor 1 directs the termination of translation in response to the peptide chain termination codons UAG and UAA. This is Peptide chain release factor 1 (prfA) from Helicobacter pylori (strain ATCC 700392 / 26695) (Campylobacter pylori).